Consider the following 372-residue polypeptide: NAD(P)H-quinone oxidoreductase subunit 1 (372 aa).

8 helical membrane passes run 27-47 (IIWL…GVLV), 97-117 (ILFT…WLIV), 128-148 (VGIG…GLLM), 176-196 (LALS…IDIV), 204-224 (ILSW…ICAL), 266-286 (ILSA…PIPV), 308-328 (SIGI…AILL), and 347-367 (FLLP…LALP).

Belongs to the complex I subunit 1 family. As to quaternary structure, NDH-1 is composed of at least 11 different subunits.

It is found in the cellular thylakoid membrane. The enzyme catalyses a plastoquinone + NADH + (n+1) H(+)(in) = a plastoquinol + NAD(+) + n H(+)(out). It catalyses the reaction a plastoquinone + NADPH + (n+1) H(+)(in) = a plastoquinol + NADP(+) + n H(+)(out). Functionally, NDH-1 shuttles electrons from an unknown electron donor, via FMN and iron-sulfur (Fe-S) centers, to quinones in the respiratory and/or the photosynthetic chain. The immediate electron acceptor for the enzyme in this species is believed to be plastoquinone. Couples the redox reaction to proton translocation, and thus conserves the redox energy in a proton gradient. The polypeptide is NAD(P)H-quinone oxidoreductase subunit 1 (Prochlorococcus marinus (strain MIT 9515)).